We begin with the raw amino-acid sequence, 516 residues long: Extracellular endo-inulinase inuA (516 aa).

Residues 1-25 (MLNPKVAYMVWMTCLGLMLPSQAQS) form the signal peptide. Substrate contacts are provided by residues 40 to 43 (WMNE), Q59, W67, and 99 to 100 (FT). The active site involves E43. The N-linked (GlcNAc...) asparagine glycan is linked to N109. 175–176 (RD) lines the substrate pocket. An N-linked (GlcNAc...) asparagine glycan is attached at N210. E233 contacts substrate. Residues N372 and N419 are each glycosylated (N-linked (GlcNAc...) asparagine).

Belongs to the glycosyl hydrolase 32 family.

The protein resides in the secreted. The catalysed reaction is Endohydrolysis of (2-&gt;1)-beta-D-fructosidic linkages in inulin.. With respect to regulation, activity is stimulated by Mn(2+), Fe(2+) Ca(2+) metal ions and DTT; and inhibited by glucose, Mg(2+), Zn(2+), Cu(2+), Hg(2+), Al(3+), and Fe(3+). Functionally, endo-inulinase involved in utilization of the plant storage polymer inulin, consisting of fructooligosaccharides with a degree of polymerization (DP) value from 2 to 60. This chain is Extracellular endo-inulinase inuA (inuA), found in Aspergillus niger.